A 446-amino-acid polypeptide reads, in one-letter code: N-succinylarginine dihydrolase (446 aa).

Residues Ser19–Ser28, Asn110, and His137–Arg138 contribute to the substrate site. Residue Glu174 is part of the active site. Residue Arg214 participates in substrate binding. His250 is a catalytic residue. Substrate is bound by residues Asp252 and Asn363. Cys369 (nucleophile) is an active-site residue.

It belongs to the succinylarginine dihydrolase family. As to quaternary structure, homodimer.

It carries out the reaction N(2)-succinyl-L-arginine + 2 H2O + 2 H(+) = N(2)-succinyl-L-ornithine + 2 NH4(+) + CO2. It participates in amino-acid degradation; L-arginine degradation via AST pathway; L-glutamate and succinate from L-arginine: step 2/5. Functionally, catalyzes the hydrolysis of N(2)-succinylarginine into N(2)-succinylornithine, ammonia and CO(2). The polypeptide is N-succinylarginine dihydrolase (Hahella chejuensis (strain KCTC 2396)).